A 173-amino-acid polypeptide reads, in one-letter code: Glutamyl-tRNA(Gln) amidotransferase subunit F, mitochondrial (173 aa).

Residues 1–15 constitute a mitochondrion transit peptide; that stretch reads MSRFMIRAVFFRRYT.

It belongs to the GatF family. As to quaternary structure, subunit of the heterotrimeric GatFAB amidotransferase (AdT) complex, composed of A, B and F subunits.

It is found in the mitochondrion inner membrane. It carries out the reaction L-glutamyl-tRNA(Gln) + L-glutamine + ATP + H2O = L-glutaminyl-tRNA(Gln) + L-glutamate + ADP + phosphate + H(+). Functionally, allows the formation of correctly charged Gln-tRNA(Gln) through the transamidation of misacylated Glu-tRNA(Gln) in the mitochondria. The reaction takes place in the presence of glutamine and ATP through an activated gamma-phospho-Glu-tRNA(Gln). Required for proper protein synthesis within the mitochondrion. The polypeptide is Glutamyl-tRNA(Gln) amidotransferase subunit F, mitochondrial (Candida glabrata (strain ATCC 2001 / BCRC 20586 / JCM 3761 / NBRC 0622 / NRRL Y-65 / CBS 138) (Yeast)).